The chain runs to 657 residues: Acetyl-coenzyme A synthetase (657 aa).

Residues 192 to 195 and Thr-311 contribute to the CoA site; that span reads RRGK. ATP is bound by residues 387–389, 411–416, Asp-504, Arg-519, and Arg-530; these read GEP and DTWWQT. Mg(2+) is bound by residues His-543 and Val-546. Position 592 (Arg-592) interacts with CoA. Lys-617 is modified (N6-acetyllysine).

It belongs to the ATP-dependent AMP-binding enzyme family. Mg(2+) serves as cofactor. Acetylated. Deacetylation by the SIR2-homolog deacetylase activates the enzyme.

It catalyses the reaction acetate + ATP + CoA = acetyl-CoA + AMP + diphosphate. In terms of biological role, catalyzes the conversion of acetate into acetyl-CoA (AcCoA), an essential intermediate at the junction of anabolic and catabolic pathways. AcsA undergoes a two-step reaction. In the first half reaction, AcsA combines acetate with ATP to form acetyl-adenylate (AcAMP) intermediate. In the second half reaction, it can then transfer the acetyl group from AcAMP to the sulfhydryl group of CoA, forming the product AcCoA. The sequence is that of Acetyl-coenzyme A synthetase from Campylobacter jejuni subsp. jejuni serotype O:6 (strain 81116 / NCTC 11828).